Consider the following 268-residue polypeptide: Hemin import ATP-binding protein HmuV (268 aa).

The ABC transporter domain maps to 5–241; it reads LKAEAASFAL…ELIADVFDVA (237 aa). 37-44 contacts ATP; the sequence is GPNGAGKS.

Belongs to the ABC transporter superfamily. Heme (hemin) importer (TC 3.A.1.14.5) family. The complex is composed of two ATP-binding proteins (HmuV), two transmembrane proteins (HmuU) and a solute-binding protein (HmuT).

The protein resides in the cell inner membrane. In terms of biological role, part of the ABC transporter complex HmuTUV involved in hemin import. Responsible for energy coupling to the transport system. This chain is Hemin import ATP-binding protein HmuV, found in Rhodopseudomonas palustris (strain ATCC BAA-98 / CGA009).